The sequence spans 149 residues: Small ribosomal subunit protein eS19 (149 aa).

This sequence belongs to the eukaryotic ribosomal protein eS19 family.

The polypeptide is Small ribosomal subunit protein eS19 (RPS19) (Mya arenaria (Soft-shell clam)).